Here is a 246-residue protein sequence, read N- to C-terminus: DNA repair protein RecO (246 aa).

The protein belongs to the RecO family.

In terms of biological role, involved in DNA repair and RecF pathway recombination. In Methylorubrum extorquens (strain CM4 / NCIMB 13688) (Methylobacterium extorquens), this protein is DNA repair protein RecO.